A 149-amino-acid polypeptide reads, in one-letter code: Arginine repressor (149 aa).

It belongs to the ArgR family.

Its subcellular location is the cytoplasm. The protein operates within amino-acid biosynthesis; L-arginine biosynthesis [regulation]. Regulates arginine biosynthesis genes. In Alkaliphilus metalliredigens (strain QYMF), this protein is Arginine repressor.